The primary structure comprises 356 residues: Probable arabinogalactan endo-beta-1,4-galactanase A (356 aa).

The N-terminal stretch at Met1 to Ala21 is a signal peptide. The N-linked (GlcNAc...) asparagine glycan is linked to Asn133. The Proton donor role is filled by Glu157. Glu268 functions as the Nucleophile in the catalytic mechanism.

Belongs to the glycosyl hydrolase 53 family.

It is found in the secreted. It catalyses the reaction The enzyme specifically hydrolyzes (1-&gt;4)-beta-D-galactosidic linkages in type I arabinogalactans.. Endogalactanase involved in the degradation of plant cell wall polysaccharides, and more particularly of hairy regions of pectin. This Aspergillus fumigatus (strain CBS 144.89 / FGSC A1163 / CEA10) (Neosartorya fumigata) protein is Probable arabinogalactan endo-beta-1,4-galactanase A (galA).